The following is a 651-amino-acid chain: DNA mismatch repair protein MutL (651 aa).

The interval 336 to 398 (RLDMTEPETG…ANSGYQPENP (63 aa)) is disordered. A compositionally biased stretch (polar residues) spans 385–394 (ARESANSGYQ).

This sequence belongs to the DNA mismatch repair MutL/HexB family.

Functionally, this protein is involved in the repair of mismatches in DNA. It is required for dam-dependent methyl-directed DNA mismatch repair. May act as a 'molecular matchmaker', a protein that promotes the formation of a stable complex between two or more DNA-binding proteins in an ATP-dependent manner without itself being part of a final effector complex. The sequence is that of DNA mismatch repair protein MutL from Pectobacterium atrosepticum (strain SCRI 1043 / ATCC BAA-672) (Erwinia carotovora subsp. atroseptica).